The primary structure comprises 241 residues: Probable transcriptional regulatory protein Reut_A2522 (241 aa).

It belongs to the TACO1 family.

It is found in the cytoplasm. In Cupriavidus pinatubonensis (strain JMP 134 / LMG 1197) (Cupriavidus necator (strain JMP 134)), this protein is Probable transcriptional regulatory protein Reut_A2522.